We begin with the raw amino-acid sequence, 326 residues long: Tagatose 1,6-diphosphate aldolase (326 aa).

This sequence belongs to the aldolase LacD family.

It carries out the reaction D-tagatofuranose 1,6-bisphosphate = D-glyceraldehyde 3-phosphate + dihydroxyacetone phosphate. It functions in the pathway carbohydrate metabolism; D-tagatose 6-phosphate degradation; D-glyceraldehyde 3-phosphate and glycerone phosphate from D-tagatose 6-phosphate: step 2/2. The sequence is that of Tagatose 1,6-diphosphate aldolase from Staphylococcus aureus (strain Mu3 / ATCC 700698).